We begin with the raw amino-acid sequence, 171 residues long: S-ribosylhomocysteine lyase (171 aa).

Fe cation contacts are provided by H54, H58, and C128.

Belongs to the LuxS family. Homodimer. It depends on Fe cation as a cofactor.

It catalyses the reaction S-(5-deoxy-D-ribos-5-yl)-L-homocysteine = (S)-4,5-dihydroxypentane-2,3-dione + L-homocysteine. Involved in the synthesis of autoinducer 2 (AI-2) which is secreted by bacteria and is used to communicate both the cell density and the metabolic potential of the environment. The regulation of gene expression in response to changes in cell density is called quorum sensing. Catalyzes the transformation of S-ribosylhomocysteine (RHC) to homocysteine (HC) and 4,5-dihydroxy-2,3-pentadione (DPD). In Salmonella typhi, this protein is S-ribosylhomocysteine lyase.